Consider the following 24-residue polypeptide: Humanin (24 aa).

The segment at 1-12 (MAPRGFSCLLLL) is sufficient to interact with BID and BIM and to suppress BID and BIM activity. The segment at 3–19 (PRGFSCLLLLTSEIDLP) is sufficient for neuroprotective activity. Positions 5–12 (GFSCLLLL) are sufficient to interact with MPP8. Required for secretion stretches follow at residues 9–11 (LLL) and 19–20 (PV).

Homodimer. Interacts with amyloid-beta protein 42 (Abeta42); the interaction prevents Abeta42 fibril formation. Interacts with BAX; forms fibers with BAX which results in BAX conformational changes and sequestering of BAX into the fibers, preventing BAX activation. Interacts with both full-length BID and cleaved BID p15; forms fibers with BID which results in BID conformational changes and sequestering of BID into the fibers, preventing BID activation. Interacts with BIM isoform BimEL but not with BIM isoforms BimL or BimS; the interaction prevents BIM-induced apoptosis. Interacts with IGFBP3; competes with importin KPNB1 for binding to IGFBP3, blocking IGFBP3 nuclear import. Interacts with TRIM11. Interacts with MPP8. In terms of tissue distribution, expressed in testis, seminal plasma and sperm (at protein level). Higher seminal plasma levels are associated with normospermia than with oligospermia, asthenospermia or oligoasthenospermia (at protein level). Higher sperm levels are associated with normospermia than with asthenospermia (at protein level). Expressed in retinal epithelial cells (at protein level). Expressed in the heart, skeletal muscle, kidney and liver. Lesser but significant expression is observed in the brain and the gastrointestinal tract. Expressed in the AD brain, where it is found in some of the large intact neurons of the occipital lobes and small and round reactive glial cells in the hippocampus.

The protein resides in the secreted. It localises to the cytoplasm. The protein localises to the cell projection. Its subcellular location is the cilium. It is found in the flagellum. The protein resides in the nucleus. It localises to the mitochondrion. In terms of biological role, plays a role as a neuroprotective factor. Protects against neuronal cell death induced by multiple different familial Alzheimer disease genes and amyloid-beta proteins in Alzheimer disease. Mediates its neuroprotective effect by interacting with a receptor complex composed of IL6ST/GP130, IL27RA/WSX1 and CNTFR. Also acts as a ligand for G-protein coupled receptors FPR2/FPRL1 and FPR3/FPRL2. Inhibits amyloid-beta protein 40 fibril formation. Also inhibits amyloid-beta protein 42 fibril formation. Suppresses apoptosis by binding to BAX and preventing the translocation of BAX from the cytosol to mitochondria. Also suppresses apoptosis by binding to BID and inhibiting the interaction of BID with BAX and BAK which prevents oligomerization of BAX and BAK and suppresses release of apoptogenic proteins from mitochondria. Forms fibers with BAX and also with BID, inducing BAX and BID conformational changes and sequestering them into the fibers which prevents their activation. Can also suppress apoptosis by interacting with BIM isoform BimEL, inhibiting BimEL-induced activation of BAX, blocking oligomerization of BAX and BAK, and preventing release of apoptogenic proteins from mitochondria. Plays a role in up-regulation of anti-apoptotic protein BIRC6/APOLLON, leading to inhibition of neuronal cell death. Binds to IGFBP3 and specifically blocks IGFBP3-induced cell death. Competes with importin KPNB1 for binding to IGFBP3 which is likely to block IGFBP3 nuclear import. Induces chemotaxis of mononuclear phagocytes via FPR2/FPRL1. Reduces aggregation and fibrillary formation by suppressing the effect of APP on mononuclear phagocytes and acts by competitively inhibiting the access of FPR2 to APP. Protects retinal pigment epithelium (RPE) cells against oxidative stress-induced and endoplasmic reticulum (ER) stress-induced apoptosis. Promotes mitochondrial biogenesis in RPE cells following oxidative stress and promotes STAT3 phosphorylation which leads to inhibition of CASP3 release. Also reduces CASP4 levels in RPE cells, suppresses ER stress-induced mitochondrial superoxide production and plays a role in up-regulation of mitochondrial glutathione. Reduces testicular hormone deprivation-induced apoptosis of germ cells at the nonandrogen-sensitive stages of the seminiferous epithelium cycle. Protects endothelial cells against free fatty acid-induced inflammation by suppressing oxidative stress, reducing expression of TXNIP and inhibiting activation of the NLRP3 inflammasome which inhibits expression of pro-inflammatory cytokines IL1B and IL18. Protects against high glucose-induced endothelial cell dysfunction by mediating activation of ERK5 which leads to increased expression of transcription factor KLF2 and prevents monocyte adhesion to endothelial cells. Inhibits the inflammatory response in astrocytes. Increases the expression of PPARGC1A/PGC1A in pancreatic beta cells which promotes mitochondrial biogenesis. Increases insulin sensitivity. In Homo sapiens (Human), this protein is Humanin.